We begin with the raw amino-acid sequence, 269 residues long: HTH-type transcriptional activator ArnR (269 aa).

Over 1–218 the chain is Cytoplasmic; that stretch reads MTKSLFDVLK…LLRLTNSYTL (218 aa). Positions 39–62 form a DNA-binding region, H-T-H motif; it reads TTEISQTINTSRKSIIDAIRKLVD. The helical transmembrane segment at 219–239 threads the bilayer; the sequence is EMANVKVMGFILISLPLLMYF. Over 240–242 the chain is Extracellular; that stretch reads RDQ. Residues 243–263 traverse the membrane as a helical segment; the sequence is LGLIELPWLYAVIFLALLSVF. Residues 264–269 lie on the Cytoplasmic side of the membrane; sequence AQILSR.

It localises to the cell membrane. In terms of biological role, involved in regulation of archaellar gene expression. Activates flaB transcription upon nutrient starvation by acting on the flaB promoter. The sequence is that of HTH-type transcriptional activator ArnR from Sulfolobus acidocaldarius (strain ATCC 33909 / DSM 639 / JCM 8929 / NBRC 15157 / NCIMB 11770).